A 150-amino-acid polypeptide reads, in one-letter code: General odorant-binding protein 19d (150 aa).

A signal peptide spans 1–23 (MSHLVHLTVLLLVGILCLGATSA). Disulfide bonds link Cys-41-Cys-72, Cys-68-Cys-126, and Cys-116-Cys-135.

Belongs to the PBP/GOBP family. Expressed in the antenna, mostly on the anterior surface of the third antennal segment. Also detected in the maxillary palps and in cells at the bases of the taste hairs on the proboscis and internal taste organs of the head.

It is found in the secreted. The sequence is that of General odorant-binding protein 19d (Obp19d) from Drosophila melanogaster (Fruit fly).